We begin with the raw amino-acid sequence, 423 residues long: Gamma-glutamyl phosphate reductase (423 aa).

The protein belongs to the gamma-glutamyl phosphate reductase family.

It is found in the cytoplasm. It catalyses the reaction L-glutamate 5-semialdehyde + phosphate + NADP(+) = L-glutamyl 5-phosphate + NADPH + H(+). It participates in amino-acid biosynthesis; L-proline biosynthesis; L-glutamate 5-semialdehyde from L-glutamate: step 2/2. Catalyzes the NADPH-dependent reduction of L-glutamate 5-phosphate into L-glutamate 5-semialdehyde and phosphate. The product spontaneously undergoes cyclization to form 1-pyrroline-5-carboxylate. The chain is Gamma-glutamyl phosphate reductase from Desulfovibrio desulfuricans (strain ATCC 27774 / DSM 6949 / MB).